A 627-amino-acid chain; its full sequence is Transducer protein MpcT (627 aa).

2 helical membrane passes run 28–48 (MLTA…LTVF) and 55–75 (LIGV…TYLI). 2 HAMP domains span residues 78–132 (ADFV…VASR) and 192–247 (EQLR…DTIS). Residues 266–502 (RVDAVADRSA…DVVGMVEEVA (237 aa)) enclose the Methyl-accepting transducer domain. A glutamate methyl ester (Glu) mark is found at Glu-310, Glu-416, and Glu-507. Disordered stretches follow at residues 505–527 (SEET…DATD) and 557–627 (GTAD…ADSQ). Residues 580-590 (AAAVVDQPQPA) are compositionally biased toward low complexity.

The protein belongs to the methyl-accepting chemotaxis (MCP) protein family. In terms of assembly, interacts with CheA, CheY and CheW1. In terms of processing, methylated by CheR.

It localises to the cell membrane. Mediates bacteriorhodopsin- and halorhodopsin-dependent photoresponses by detecting membrane potential changes. Probably transduces the signal to the histidine kinase CheA. The sequence is that of Transducer protein MpcT (mpcT) from Halobacterium salinarum (strain ATCC 29341 / DSM 671 / R1).